Reading from the N-terminus, the 1547-residue chain is ABC multidrug transporter atrF (1547 aa).

2 disordered regions span residues 1–66 and 85–123; these read MADG…RRGA and TRSV…IDGD. Residues 10–19 show a composition bias toward polar residues; the sequence is SATSTTMETN. The span at 36 to 47 shows a compositional bias: low complexity; it reads SSSMTATSSELS. The segment covering 51 to 66 has biased composition (basic and acidic residues); that stretch reads RWGERDQGEPVSRRGA. The segment covering 111–123 has biased composition (acidic residues); sequence KAIDEEDSTIDGD. The ABC transporter 1 domain occupies 197 to 439; the sequence is IPQLRFGKQP…FVNLGFHCPE (243 aa). Residues Asn-299 and Asn-363 are each glycosylated (N-linked (GlcNAc...) asparagine). The next 7 helical transmembrane spans lie at 552-572, 586-606, 635-655, 657-677, 698-718, 722-742, and 804-824; these read LYTK…LFYG, ALFF…MPAV, FPAI…MTGL, VTAS…FSIT, GIAL…QGLI, IWFG…AVLT, and FGVV…AAEF. One can recognise an ABC transporter 2 domain in the interval 892–1130; sequence FTWSNVEYTV…DVIKYFADRG (239 aa). Asn-905 carries an N-linked (GlcNAc...) asparagine glycan. Position 928–935 (928–935) interacts with ATP; sequence GASGAGKT. N-linked (GlcNAc...) asparagine glycans are attached at residues Asn-980 and Asn-999. The next 8 helical transmembrane spans lie at 1230–1250, 1260–1280, 1309–1329, 1334–1354, 1356–1376, 1397–1417, 1491–1511, and 1520–1540; these read FVSV…GNSI, IFLI…KFYI, IPMA…PVGF, STAG…SSWG, WICA…FFFV, YWMY…SSIF, CFGI…FFIY, and FGMG…KGVF.

This sequence belongs to the ABC transporter superfamily. ABCG family. PDR (TC 3.A.1.205) subfamily.

Its subcellular location is the cell membrane. It carries out the reaction voriconazole(in) + ATP + H2O = voriconazole(out) + ADP + phosphate + H(+). It catalyses the reaction fluconazole(in) + ATP + H2O = fluconazole(out) + ADP + phosphate + H(+). Its function is as follows. Pleiotropic ABC efflux transporter involved in the basal level of azole susceptibility. Confers resistance to fluconazole and voriconazole. In Aspergillus fumigatus (strain ATCC MYA-4609 / CBS 101355 / FGSC A1100 / Af293) (Neosartorya fumigata), this protein is ABC multidrug transporter atrF.